A 420-amino-acid polypeptide reads, in one-letter code: MHKFDLELSRRANPLLFSAERYEEYPLKYDELKQYLLSQNPSHPHHNSRPYTSIDYFDYLLYRSKNDESEIDLDKKLVSEFALYYVQKEHLNSDDLNPTLNELLKLQPKSADWYEMMLRILESINTTGIDQLTKENNNSFPNSKRARSSTNMGGTDKFNKGAYHTDKADDDKNEILQELTSFLMSNSIQKGIDIKPIPLDDPVKFLKNGINSILDTCVSLEKNTSSPPISPNAAAIQEEDSSKKLEELETAFSDLQLAHNFLTKQFENDRAEYVQDIEKLTRTNRELQDKLLNNHSNLSKTEKKLHELEQENKELEKANNKLNSSRHNFGMSSPASSPVTWDPSSPSSVGSPTSGSGSRSLSIMTSEFKKVLTSTQRKYEKELSDEREHRFKLERELALLKNAEANTSLALNRDDPPDML.

Over residues Leu-132 to Gly-153 the composition is skewed to polar residues. Positions Leu-132–Asp-169 are disordered. Residues Lys-157–Asp-169 are compositionally biased toward basic and acidic residues. Position 230 is a phosphoserine (Ser-230). A disordered region spans residues Asn-323 to Ile-363. Over residues Ser-325–Val-339 the composition is skewed to polar residues. Residues Pro-343–Ser-362 are compositionally biased toward low complexity.

Its function is as follows. Localized to sites of polarized growth and is required for efficient mating and bipolar budding. This Saccharomyces cerevisiae (strain ATCC 204508 / S288c) (Baker's yeast) protein is Protein PEA2 (PEA2).